Here is a 539-residue protein sequence, read N- to C-terminus: GMP synthase [glutamine-hydrolyzing] (539 aa).

The Glutamine amidotransferase type-1 domain occupies 4–202 (KVLILDFGSQ…VLEIAGAKPD (199 aa)). The Nucleophile role is filled by cysteine 81. Active-site residues include histidine 176 and glutamate 178. The GMPS ATP-PPase domain maps to 203-395 (WVMRDHIDEA…LGLPHEMVYR (193 aa)). Residue 230–236 (SGGVDSS) coordinates ATP.

As to quaternary structure, homodimer.

The enzyme catalyses XMP + L-glutamine + ATP + H2O = GMP + L-glutamate + AMP + diphosphate + 2 H(+). The protein operates within purine metabolism; GMP biosynthesis; GMP from XMP (L-Gln route): step 1/1. In terms of biological role, catalyzes the synthesis of GMP from XMP. The sequence is that of GMP synthase [glutamine-hydrolyzing] from Ralstonia pickettii (strain 12J).